Consider the following 183-residue polypeptide: Neuroblastoma suppressor of tumorigenicity 1 (183 aa).

Positions 1–19 (MVMCVRAVLVCVLLELSRA) are cleaved as a signal peptide. Disulfide bonds link Cys-38-Cys-88, Cys-52-Cys-102, Cys-62-Cys-121, Cys-66-Cys-123, and Cys-85-Cys-126. Residues 38-127 (CEAKNITQIV…ILHCSCQSCS (90 aa)) form the CTCK domain. The tract at residues 145–170 (AQDLPSLPDATHTHPQHAHMQADQRD) is disordered.

This sequence belongs to the DAN family.

It is found in the secreted. Functionally, may act as a tumor suppressor. This chain is Neuroblastoma suppressor of tumorigenicity 1 (nbl1), found in Danio rerio (Zebrafish).